The chain runs to 387 residues: Cysteine desulfurase (387 aa).

Pyridoxal 5'-phosphate-binding positions include 72 to 73 (GT), asparagine 152, glutamine 180, and 200 to 202 (SAH). Position 203 is an N6-(pyridoxal phosphate)lysine (lysine 203). Residue threonine 238 participates in pyridoxal 5'-phosphate binding. Residue cysteine 323 is the Cysteine persulfide intermediate of the active site. A [2Fe-2S] cluster-binding site is contributed by cysteine 323.

It belongs to the class-V pyridoxal-phosphate-dependent aminotransferase family. NifS/IscS subfamily. In terms of assembly, homodimer. Requires pyridoxal 5'-phosphate as cofactor.

The catalysed reaction is (sulfur carrier)-H + L-cysteine = (sulfur carrier)-SH + L-alanine. Catalyzes the removal of elemental sulfur atoms from cysteine to produce alanine. Seems to participate in the biosynthesis of the nitrogenase metalloclusters by providing the inorganic sulfur required for the Fe-S core formation. The chain is Cysteine desulfurase from Cereibacter sphaeroides (Rhodobacter sphaeroides).